Consider the following 129-residue polypeptide: Large ribosomal subunit protein bL21 (129 aa).

Belongs to the bacterial ribosomal protein bL21 family. As to quaternary structure, part of the 50S ribosomal subunit. Contacts protein L20.

This protein binds to 23S rRNA in the presence of protein L20. This is Large ribosomal subunit protein bL21 from Microcystis aeruginosa (strain NIES-843 / IAM M-2473).